The chain runs to 540 residues: L-aspartate oxidase (540 aa).

Residues 16–19, Lys38, 45–52, and Asp223 contribute to the FAD site; these read SGAA and STFYAQGG. Arg290 (proton donor/acceptor) is an active-site residue. FAD-binding positions include Glu375 and 391–392; that span reads SL.

The protein belongs to the FAD-dependent oxidoreductase 2 family. NadB subfamily. FAD serves as cofactor.

It is found in the cytoplasm. The catalysed reaction is L-aspartate + O2 = iminosuccinate + H2O2. It catalyses the reaction fumarate + L-aspartate = iminosuccinate + succinate. Its pathway is cofactor biosynthesis; NAD(+) biosynthesis; iminoaspartate from L-aspartate (oxidase route): step 1/1. Its function is as follows. Catalyzes the oxidation of L-aspartate to iminoaspartate, the first step in the de novo biosynthesis of NAD(+). Can use either oxygen or fumarate as electron acceptors, which allows the enzyme to be functional under aerobic and anaerobic conditions. This chain is L-aspartate oxidase (nadB), found in Escherichia coli O157:H7.